A 127-amino-acid chain; its full sequence is Large ribosomal subunit protein bL17 (127 aa).

It belongs to the bacterial ribosomal protein bL17 family. Part of the 50S ribosomal subunit. Contacts protein L32.

This is Large ribosomal subunit protein bL17 from Haemophilus ducreyi (strain 35000HP / ATCC 700724).